The chain runs to 471 residues: Microtubule-associated tyrosine carboxypeptidase 1 (471 aa).

Disordered regions lie at residues 1–40 and 76–116; these read MVLDSGAQAYDQAPPSPPTSPPSLRHRLKPSDRDGPPLYP and HMRR…LRPA. His-280 serves as a coordination point for Zn(2+). The active-site Nucleophile is Glu-281. Residues His-285 and Glu-316 each contribute to the Zn(2+) site.

The protein belongs to the peptidase MATCAP family. Zn(2+) is required as a cofactor.

The protein resides in the cytoplasm. It is found in the cytoskeleton. It carries out the reaction C-terminal L-alpha-aminoacyl-L-glutamyl-L-glutamyl-L-tyrosyl-[tubulin] + H2O = C-terminal L-alpha-aminoacyl-L-glutamyl-L-glutamyl-[tubulin] + L-tyrosine. The enzyme catalyses C-terminal L-alpha-aminoacyl-L-glutamyl-L-glutamyl-L-phenylalanyl-[tubulin] + H2O = C-terminal L-alpha-aminoacyl-L-glutamyl-L-glutamyl-[tubulin] + L-phenylalanine. In terms of biological role, tyrosine carboxypeptidase that removes the C-terminal tyrosine residue of alpha-tubulin, thereby regulating microtubule dynamics and function. Also able to remove the C-terminal phenylalanine residue of alpha-tubulin TUBA8. Recognizes adjacent tubulin dimers along the same protofilament. The chain is Microtubule-associated tyrosine carboxypeptidase 1 from Homo sapiens (Human).